Reading from the N-terminus, the 199-residue chain is Glycerol-3-phosphate acyltransferase (199 aa).

5 helical membrane-spanning segments follow: residues 3–23 (IKILYIIITYLCGSIPSAYIV), 55–75 (VITLIADILKGFIPVYFATFI), 79–99 (FSYSVAVAAAAMVGHVFTIFL), 113–133 (VFFALMRWPSLIALAIFGLAF), and 155–175 (YFLGYSTEVVIFTFAITLLII).

This sequence belongs to the PlsY family. As to quaternary structure, probably interacts with PlsX.

The protein localises to the cell inner membrane. It catalyses the reaction an acyl phosphate + sn-glycerol 3-phosphate = a 1-acyl-sn-glycero-3-phosphate + phosphate. It participates in lipid metabolism; phospholipid metabolism. Catalyzes the transfer of an acyl group from acyl-phosphate (acyl-PO(4)) to glycerol-3-phosphate (G3P) to form lysophosphatidic acid (LPA). This enzyme utilizes acyl-phosphate as fatty acyl donor, but not acyl-CoA or acyl-ACP. In Endomicrobium trichonymphae, this protein is Glycerol-3-phosphate acyltransferase.